We begin with the raw amino-acid sequence, 56 residues long: MSKFKKYLGAAWDFTKEHGVTILRGVAVLLVGRKVGRVANQSADVLDTVIKGTKKN.

It is found in the host cell outer membrane. The protein localises to the host cell inner membrane. In terms of biological role, disrupts the host outer membranes during host lysis. The chain is Disruptin gp28 from Escherichia phage phiKT.